Consider the following 509-residue polypeptide: Anaerobic nitric oxide reductase flavorubredoxin (509 aa).

Residues 30–210 (LQGSSYNSYL…PFSRLVTAKI (181 aa)) are zinc metallo-hydrolase. Residues His79, Glu81, Asp83, His147, Asp166, and His227 each coordinate Fe cation. A Flavodoxin-like domain is found at 254–393 (ITLFYDTMSN…VCREHGREIA (140 aa)). Residues 260 to 264 (TMSNN) and 342 to 369 (AFGS…ETTL) contribute to the FMN site. Residues 457–508 (SGCMQCSVCQWIYDPALGEPMQDVTPGTMWSDVPDSFLCPECGLGKDVFNPI) form the Rubredoxin-like domain. 4 residues coordinate Fe cation: Cys462, Cys465, Cys495, and Cys498.

The protein in the N-terminal section; belongs to the zinc metallo-hydrolase group 3 family. In terms of assembly, homotetramer. It depends on Fe cation as a cofactor. Requires FMN as cofactor.

The protein localises to the cytoplasm. It participates in nitrogen metabolism; nitric oxide reduction. Anaerobic nitric oxide reductase; uses NADH to detoxify nitric oxide (NO), protecting several 4Fe-4S NO-sensitive enzymes. Has at least 2 reductase partners, only one of which (NorW, flavorubredoxin reductase) has been identified. NO probably binds to the di-iron center; electrons enter from the NorW at rubredoxin and are transferred sequentially to the FMN center and the di-iron center. Also able to function as an aerobic oxygen reductase. The polypeptide is Anaerobic nitric oxide reductase flavorubredoxin (Pectobacterium atrosepticum (strain SCRI 1043 / ATCC BAA-672) (Erwinia carotovora subsp. atroseptica)).